Consider the following 249-residue polypeptide: MASLGVNIDHIANIREARRTVEPDPVPMAMLAELGGADGITVHLREDRRHIQDRDVELLRQTVRSRLNLEMAATAEMVAIALRVKPDMVTLVPEHRQEVTTEGGLDVVAQLSELTGMVSQLQTSGIPVSLFVDPVASQLRGCTDSGARWVELHTGRYAEGSWNDQPHELARLTEGTATARAMGLRVNAGHGLTYQNVEPVAAIPGMEELNIGHTIVARAVVVGLQQAVREMKALIQNPRRDPLFGQALG.

A 3-amino-2-oxopropyl phosphate-binding site is contributed by Asn-7. 9–10 lines the 1-deoxy-D-xylulose 5-phosphate pocket; it reads DH. Residue Arg-18 participates in 3-amino-2-oxopropyl phosphate binding. Residue His-43 is the Proton acceptor of the active site. Arg-45 and His-50 together coordinate 1-deoxy-D-xylulose 5-phosphate. Glu-70 acts as the Proton acceptor in catalysis. Thr-100 contributes to the 1-deoxy-D-xylulose 5-phosphate binding site. Residue His-190 is the Proton donor of the active site. Residues Gly-191 and 212–213 contribute to the 3-amino-2-oxopropyl phosphate site; that span reads GH.

This sequence belongs to the PNP synthase family. In terms of assembly, homooctamer; tetramer of dimers.

It localises to the cytoplasm. The enzyme catalyses 3-amino-2-oxopropyl phosphate + 1-deoxy-D-xylulose 5-phosphate = pyridoxine 5'-phosphate + phosphate + 2 H2O + H(+). It functions in the pathway cofactor biosynthesis; pyridoxine 5'-phosphate biosynthesis; pyridoxine 5'-phosphate from D-erythrose 4-phosphate: step 5/5. Functionally, catalyzes the complicated ring closure reaction between the two acyclic compounds 1-deoxy-D-xylulose-5-phosphate (DXP) and 3-amino-2-oxopropyl phosphate (1-amino-acetone-3-phosphate or AAP) to form pyridoxine 5'-phosphate (PNP) and inorganic phosphate. The polypeptide is Pyridoxine 5'-phosphate synthase (Synechococcus sp. (strain CC9902)).